The chain runs to 445 residues: Chromosome partition protein MukF (445 aa).

The segment at 212–240 is leucine-zipper; that stretch reads LDETSGNLRELQDTLNAAGDKLQEQLLRI.

Belongs to the MukF family. As to quaternary structure, interacts, and probably forms a ternary complex, with MukE and MukB via its C-terminal region. The complex formation is stimulated by calcium or magnesium. It is required for an interaction between MukE and MukB.

The protein resides in the cytoplasm. It localises to the nucleoid. Involved in chromosome condensation, segregation and cell cycle progression. May participate in facilitating chromosome segregation by condensation DNA from both sides of a centrally located replisome during cell division. Not required for mini-F plasmid partitioning. Probably acts via its interaction with MukB and MukE. Overexpression results in anucleate cells. It has a calcium binding activity. The sequence is that of Chromosome partition protein MukF from Mannheimia succiniciproducens (strain KCTC 0769BP / MBEL55E).